A 213-amino-acid chain; its full sequence is MDTIWDISPPIAPATPVWPGDTPVGIERVWRIEAGSPVNVARVTLSPHTGAHADAPLHYDADGTPIGAVPLDAYLGRCRVIHCIGARSAVTPEHVRAALAGAPPRVLLRTYGQAPQHAWNSAFCAVAPETIDLLAAHGVRLVGIDTPSLDPQESKTMDAHRRIRAHRMAILEGLVLDEIAAGDYELIALPLKFTTLDASPVRAVLRALPDAPR.

Trp-18 provides a ligand contact to substrate. Residues His-48, His-52, and Asp-54 each contribute to the Zn(2+) site. Catalysis depends on His-58, which acts as the Proton donor/acceptor. Zn(2+) contacts are provided by His-160 and Glu-172.

It belongs to the Cyclase 1 superfamily. KynB family. Homodimer. Requires Zn(2+) as cofactor.

It carries out the reaction N-formyl-L-kynurenine + H2O = L-kynurenine + formate + H(+). The protein operates within amino-acid degradation; L-tryptophan degradation via kynurenine pathway; L-kynurenine from L-tryptophan: step 2/2. Catalyzes the hydrolysis of N-formyl-L-kynurenine to L-kynurenine, the second step in the kynurenine pathway of tryptophan degradation. The sequence is that of Kynurenine formamidase from Burkholderia pseudomallei (strain 1710b).